The following is a 217-amino-acid chain: Protein MODIFYING WALL LIGNIN-2 (217 aa).

An N-terminal signal peptide occupies residues 1 to 23; the sequence is MHNLFLYSVVFSLGLVSFITCFA. Residues 24 to 51 are Cytoplasmic-facing; that stretch reads AEFKRTQKEDIRWDTERNCYVPGSHAFG. The chain crosses the membrane as a helical span at residues 52–72; the sequence is LGSAAVLCFCLAQIVGNIVVF. The Extracellular portion of the chain corresponds to 73–94; it reads RNHRTRTKREDGYKITDLTLPT. The chain crosses the membrane as a helical span at residues 95-115; the sequence is VLLLLSWSNFVVVVLILSTAI. At 116–137 the chain is on the cytoplasmic side; sequence SMSRAQAYGEGWLDEDCYLVKD. The helical transmembrane segment at 138–158 threads the bilayer; the sequence is GVFAASGCLAILGLGALTISA. Over 159–217 the chain is Extracellular; that stretch reads TRIKVKKQQQLVQVVIKDQNQDQRRSMEEEQKHDEHQTNKSESVIHLVEEVSSTNISRI. N-linked (GlcNAc...) asparagine glycans are attached at residues asparagine 197 and asparagine 213.

This sequence belongs to the DESIGUAL family.

The protein resides in the cell membrane. Together with MWL1, contributes to secondary cell wall biology, specifically lignin biosynthesis. The polypeptide is Protein MODIFYING WALL LIGNIN-2 (Arabidopsis thaliana (Mouse-ear cress)).